A 545-amino-acid polypeptide reads, in one-letter code: CTP synthase (545 aa).

An amidoligase domain region spans residues Met-1 to Ile-266. Ser-14 contributes to the CTP binding site. A UTP-binding site is contributed by Ser-14. Residues Ser-15 to Ile-20 and Asp-72 each bind ATP. The Mg(2+) site is built by Asp-72 and Glu-140. Residues Asp-147–Glu-149, Lys-187–Gln-192, and Lys-223 contribute to the CTP site. UTP is bound by residues Lys-187–Gln-192 and Lys-223. Lys-239–Val-241 lines the ATP pocket. One can recognise a Glutamine amidotransferase type-1 domain in the interval Thr-291 to Arg-542. Residue Gly-352 coordinates L-glutamine. The active-site Nucleophile; for glutamine hydrolysis is the Cys-379. L-glutamine-binding positions include Leu-380–Gln-383, Glu-403, and Arg-470. Active-site residues include His-515 and Glu-517.

The protein belongs to the CTP synthase family. As to quaternary structure, homotetramer.

It carries out the reaction UTP + L-glutamine + ATP + H2O = CTP + L-glutamate + ADP + phosphate + 2 H(+). It catalyses the reaction L-glutamine + H2O = L-glutamate + NH4(+). The enzyme catalyses UTP + NH4(+) + ATP = CTP + ADP + phosphate + 2 H(+). It participates in pyrimidine metabolism; CTP biosynthesis via de novo pathway; CTP from UDP: step 2/2. With respect to regulation, allosterically activated by GTP, when glutamine is the substrate; GTP has no effect on the reaction when ammonia is the substrate. The allosteric effector GTP functions by stabilizing the protein conformation that binds the tetrahedral intermediate(s) formed during glutamine hydrolysis. Inhibited by the product CTP, via allosteric rather than competitive inhibition. Catalyzes the ATP-dependent amination of UTP to CTP with either L-glutamine or ammonia as the source of nitrogen. Regulates intracellular CTP levels through interactions with the four ribonucleotide triphosphates. The polypeptide is CTP synthase (Shewanella denitrificans (strain OS217 / ATCC BAA-1090 / DSM 15013)).